A 447-amino-acid polypeptide reads, in one-letter code: Probable glycine dehydrogenase (decarboxylating) subunit 1 (447 aa).

The protein belongs to the GcvP family. N-terminal subunit subfamily. As to quaternary structure, the glycine cleavage system is composed of four proteins: P, T, L and H. In this organism, the P 'protein' is a heterodimer of two subunits.

It catalyses the reaction N(6)-[(R)-lipoyl]-L-lysyl-[glycine-cleavage complex H protein] + glycine + H(+) = N(6)-[(R)-S(8)-aminomethyldihydrolipoyl]-L-lysyl-[glycine-cleavage complex H protein] + CO2. The glycine cleavage system catalyzes the degradation of glycine. The P protein binds the alpha-amino group of glycine through its pyridoxal phosphate cofactor; CO(2) is released and the remaining methylamine moiety is then transferred to the lipoamide cofactor of the H protein. This chain is Probable glycine dehydrogenase (decarboxylating) subunit 1, found in Beijerinckia indica subsp. indica (strain ATCC 9039 / DSM 1715 / NCIMB 8712).